A 543-amino-acid chain; its full sequence is Adenosine deaminase 2 (543 aa).

An N-terminal signal peptide occupies residues 1–26 (MFLKFKNIFFIVLTLSIVFNGLIVNS). A compositionally biased stretch (low complexity) spans 31–54 (INNKNNNNNNNNKDLSSSESGSSS). Residues 31–58 (INNKNNNNNNNNKDLSSSESGSSSDINP) form a disordered region. An N-linked (GlcNAc...) asparagine glycan is attached at Asn126. His144 and His146 together coordinate Zn(2+). N-linked (GlcNAc...) asparagine glycosylation is present at Asn179. 232–239 (WRKFDGIF) contacts substrate. N-linked (GlcNAc...) asparagine glycosylation is found at Asn309 and Asn326. Gly355 is a binding site for substrate. Residue His389 participates in Zn(2+) binding. The active-site Proton donor is the Glu392. Asn397 carries N-linked (GlcNAc...) asparagine glycosylation. The active-site Proton acceptor is His414. Asp471 contributes to the Zn(2+) binding site. Asp472 is a substrate binding site. Residues Asn508 and Asn514 are each glycosylated (N-linked (GlcNAc...) asparagine).

The protein belongs to the metallo-dependent hydrolases superfamily. Adenosine and AMP deaminases family. ADGF subfamily. It depends on Zn(2+) as a cofactor.

The protein resides in the secreted. It catalyses the reaction adenosine + H2O + H(+) = inosine + NH4(+). Adenosine deaminase that may contribute to the degradation of extracellular adenosine, a signaling molecule that controls a variety of cellular responses. May play a role in the regulation of cell proliferation. This Dictyostelium discoideum (Social amoeba) protein is Adenosine deaminase 2.